The following is a 315-amino-acid chain: FAD-linked oxidoreductase sthB (315 aa).

Residues 19–201 form the FAD-binding PCMH-type domain; the sequence is QPCSLGNYVS…LSMTSRVHAD (183 aa).

It belongs to the oxygen-dependent FAD-linked oxidoreductase family.

It carries out the reaction betaenone C = betaenone A. The catalysed reaction is stemphyloxin I = stemphyloxin II. The protein operates within mycotoxin biosynthesis. Functionally, FAD-linked oxidoreductase; part of the gene cluster that mediates the biosynthesis of the phytotoxin stemphyloxin II. The first step of the pathway is the synthesis of dehydroprobetaenone I by the polyketide synthase sthA and the enoyl reductase sthE via condensation of one acetyl-CoA starter unit with 7 malonyl-CoA units and 5 methylations. The C-terminal reductase (R) domain of sthA catalyzes the reductive release of the polyketide chain. Because sthA lacks a designated enoylreductase (ER) domain, the required activity is provided the enoyl reductase sthE. The short-chain dehydrogenase/reductase sthC then catalyzes reduction of dehydroprobetaenone I to probetaenone I. The cytochrome P450 monooxygenase sthF catalyzes successive epoxidation, oxidation (resulting from epoxide opening) and hydroxylation to install a tertiary alcohol in the decaline ring to yield betaenone C from dehydroprobetaenone I and betaenone B from probetaenone I. The FAD-linked oxidoreductase sthB is responsible for the conversion of betaenone C to betaenone A via an intramolecular aldol reaction between C-1 and C-17 to form the bridged tricyclic system in betaenone A. Finally, the cytochrome P450 monooxygenase sthD catalyzes the hydroxylation of C-15 to afford the final metabolite stemphyloxin II. This chain is FAD-linked oxidoreductase sthB, found in Phaeosphaeria nodorum (strain SN15 / ATCC MYA-4574 / FGSC 10173) (Glume blotch fungus).